The chain runs to 361 residues: D-amino-acid oxidase (361 aa).

The first 22 residues, 1–22 (MSNTIVVVGAGVIGLTSALLLS), serve as a signal peptide directing secretion. FAD contacts are provided by A10, I13, K34, H35, A45, S46, G50, and N52. N-linked (GlcNAc...) asparagine glycosylation is found at N193 and N222. Positions 242, 258, and 305 each coordinate (R)-lactate. Positions 242, 258, and 305 each coordinate anthranilate. Residues R305, S332, G335, Y336, and Q337 each coordinate FAD. Residues 359-361 (SKL) carry the Microbody targeting signal motif.

Belongs to the DAMOX/DASOX family. The cofactor is FAD. The N-terminus is blocked.

It is found in the peroxisome matrix. The catalysed reaction is a D-alpha-amino acid + O2 + H2O = a 2-oxocarboxylate + H2O2 + NH4(+). Its function is as follows. Catalyzes the oxidative deamination of D-amino acids with broad substrate specificity. Enables the organism to utilize D-amino acids as a source of nutrients. The chain is D-amino-acid oxidase from Fusarium vanettenii (Neocosmospora pisi).